Here is a 435-residue protein sequence, read N- to C-terminus: Serine--tRNA ligase (435 aa).

242-244 lines the L-serine pocket; that stretch reads TAE. ATP is bound at residue 273–275; it reads RSE. E296 lines the L-serine pocket. 360 to 363 provides a ligand contact to ATP; the sequence is EISS. S396 contributes to the L-serine binding site.

This sequence belongs to the class-II aminoacyl-tRNA synthetase family. Type-1 seryl-tRNA synthetase subfamily. Homodimer. The tRNA molecule binds across the dimer.

It localises to the cytoplasm. It catalyses the reaction tRNA(Ser) + L-serine + ATP = L-seryl-tRNA(Ser) + AMP + diphosphate + H(+). The catalysed reaction is tRNA(Sec) + L-serine + ATP = L-seryl-tRNA(Sec) + AMP + diphosphate + H(+). It participates in aminoacyl-tRNA biosynthesis; selenocysteinyl-tRNA(Sec) biosynthesis; L-seryl-tRNA(Sec) from L-serine and tRNA(Sec): step 1/1. In terms of biological role, catalyzes the attachment of serine to tRNA(Ser). Is also able to aminoacylate tRNA(Sec) with serine, to form the misacylated tRNA L-seryl-tRNA(Sec), which will be further converted into selenocysteinyl-tRNA(Sec). The protein is Serine--tRNA ligase of Vibrio cholerae serotype O1 (strain ATCC 39541 / Classical Ogawa 395 / O395).